A 347-amino-acid polypeptide reads, in one-letter code: Holliday junction branch migration complex subunit RuvB (347 aa).

Positions 1 to 180 are large ATPase domain (RuvB-L); it reads MTSRVVSPEQ…FGIPCRMNFY (180 aa). ATP is bound by residues Leu-19, Arg-20, Gly-61, Lys-64, Thr-65, Thr-66, 127–129, Arg-170, Tyr-180, and Arg-217; that span reads EDF. Residue Thr-65 coordinates Mg(2+). Positions 181 to 251 are small ATPAse domain (RuvB-S); the sequence is EPAELEAIVS…VADAALNRLE (71 aa). Positions 254–347 are head domain (RuvB-H); that stretch reads RIGLDAMDRR…LLTRMDEEGE (94 aa). DNA-binding residues include Arg-290, Arg-309, and Arg-314.

The protein belongs to the RuvB family. Homohexamer. Forms an RuvA(8)-RuvB(12)-Holliday junction (HJ) complex. HJ DNA is sandwiched between 2 RuvA tetramers; dsDNA enters through RuvA and exits via RuvB. An RuvB hexamer assembles on each DNA strand where it exits the tetramer. Each RuvB hexamer is contacted by two RuvA subunits (via domain III) on 2 adjacent RuvB subunits; this complex drives branch migration. In the full resolvosome a probable DNA-RuvA(4)-RuvB(12)-RuvC(2) complex forms which resolves the HJ.

It is found in the cytoplasm. It carries out the reaction ATP + H2O = ADP + phosphate + H(+). The RuvA-RuvB-RuvC complex processes Holliday junction (HJ) DNA during genetic recombination and DNA repair, while the RuvA-RuvB complex plays an important role in the rescue of blocked DNA replication forks via replication fork reversal (RFR). RuvA specifically binds to HJ cruciform DNA, conferring on it an open structure. The RuvB hexamer acts as an ATP-dependent pump, pulling dsDNA into and through the RuvAB complex. RuvB forms 2 homohexamers on either side of HJ DNA bound by 1 or 2 RuvA tetramers; 4 subunits per hexamer contact DNA at a time. Coordinated motions by a converter formed by DNA-disengaged RuvB subunits stimulates ATP hydrolysis and nucleotide exchange. Immobilization of the converter enables RuvB to convert the ATP-contained energy into a lever motion, pulling 2 nucleotides of DNA out of the RuvA tetramer per ATP hydrolyzed, thus driving DNA branch migration. The RuvB motors rotate together with the DNA substrate, which together with the progressing nucleotide cycle form the mechanistic basis for DNA recombination by continuous HJ branch migration. Branch migration allows RuvC to scan DNA until it finds its consensus sequence, where it cleaves and resolves cruciform DNA. The chain is Holliday junction branch migration complex subunit RuvB from Paramagnetospirillum magneticum (strain ATCC 700264 / AMB-1) (Magnetospirillum magneticum).